The chain runs to 279 residues: Membrane protein insertase YidC (279 aa).

An N-terminal signal peptide occupies residues 1 to 22 (MKHLKRNMALLSVAALSFILTA). A lipid anchor (N-palmitoyl cysteine) is attached at cysteine 23. A lipid anchor (S-diacylglycerol cysteine) is attached at cysteine 23. Helical transmembrane passes span 35–55 (IWDG…SKLF), 59–79 (YGWG…PLMI), 129–149 (MAGC…YAAV), 170–190 (PYFI…WLSM), and 210–230 (PLVI…YWVV). Basic and acidic residues predominate over residues 253–268 (EEKIQTEKAKRKAIEK). The tract at residues 253–279 (EEKIQTEKAKRKAIEKAKRRAMKSKRK) is disordered. Basic residues predominate over residues 269–279 (AKRRAMKSKRK).

It belongs to the OXA1/ALB3/YidC family. Type 2 subfamily.

Its subcellular location is the cell membrane. Functionally, required for the insertion and/or proper folding and/or complex formation of integral membrane proteins into the membrane. Involved in integration of membrane proteins that insert both dependently and independently of the Sec translocase complex, as well as at least some lipoproteins. The polypeptide is Membrane protein insertase YidC (Pediococcus pentosaceus (strain ATCC 25745 / CCUG 21536 / LMG 10740 / 183-1w)).